A 1010-amino-acid chain; its full sequence is Plasma membrane ATPase 2 (1010 aa).

A compositionally biased stretch (basic and acidic residues) spans 1-14 (MQRNNGEGRPEGMH). 2 disordered regions span residues 1–126 (MQRN…EDED) and 139–165 (QDQE…PEEL). Residues 1–201 (MQRNNGEGRP…KEEKTNNIKK (201 aa)) are Cytoplasmic-facing. Residues 25-34 (FKNNASPQDD) are compositionally biased toward polar residues. The span at 42 to 52 (YEEGGVEDSAV) shows a compositional bias: acidic residues. Over residues 68–106 (APNTHAQQANLQSGNTSITHETQSTSRGQEATTSPSLSA) the composition is skewed to polar residues. Residues 140-151 (DQEEEQVEEEES) show a composition bias toward acidic residues. The helical transmembrane segment at 202 to 222 (FLSFFVGPIQFVMELAAALAA) threads the bilayer. The Extracellular segment spans residues 223–226 (GLRD). The helical transmembrane segment at 227–246 (WVDFGVICALLLLNATVGFV) threads the bilayer. Residues 247–377 (QEYQAGSIVD…SQGHFTEVLN (131 aa)) lie on the Cytoplasmic side of the membrane. The chain crosses the membrane as a helical span at residues 378–399 (GIGTILLVLVILTLLCIYTAAF). Topologically, residues 400-410 (YRSVRLAALLE) are extracellular. The chain crosses the membrane as a helical span at residues 411-433 (YTLAITIIGVPVGLPAVVTTTMA). At 434–805 (VGAAYLAKKK…LIIRNQLLNL (372 aa)) the chain is on the cytoplasmic side. Catalysis depends on Asp464, which acts as the 4-aspartylphosphate intermediate. Residues Asp720 and Asp724 each coordinate Mg(2+). Residues 806–824 (ELIVFIAIFADVATLAIAY) form a helical membrane-spanning segment. Topologically, residues 825-840 (DNAPYAMKPVKWNLPR) are extracellular. The helical transmembrane segment at 841–860 (LWGLATIVGILLAIGTWIVN) threads the bilayer. Residues 861 to 912 (TTMIAQGQNRGIVQNFGVQDEVLFLQISLTENWLIFITRCSGPFWSSFPSWQ) lie on the Cytoplasmic side of the membrane. A helical membrane pass occupies residues 913 to 933 (LSGAVLVVDILATLFCIFGWF). Topologically, residues 934–946 (KGGHQTSIVAVIR) are extracellular. Residues 947–963 (IWMYSFGIFCLIAGVYY) traverse the membrane as a helical segment. The Cytoplasmic segment spans residues 964 to 1010 (ILSESSSFDRWMHGKHKERGTTRKLEDFVMQLQRTSTHHEAEGKVTS).

Belongs to the cation transport ATPase (P-type) (TC 3.A.3) family. Type IIIA subfamily. In terms of processing, in addition to transient phosphorylation of the active site Asp residue, this protein, but not the product of the pma1 locus, is phosphorylated efficiently in isolated plasma membrane.

It localises to the cell membrane. The enzyme catalyses ATP + H2O + H(+)(in) = ADP + phosphate + 2 H(+)(out). Its function is as follows. The plasma membrane ATPase of plants and fungi is a hydrogen ion pump. The proton gradient it generates drives the active transport of nutrients by H(+)-symport. The resulting external acidification and/or internal alkinization may mediate growth responses. This Schizosaccharomyces pombe (strain 972 / ATCC 24843) (Fission yeast) protein is Plasma membrane ATPase 2 (pma2).